Consider the following 440-residue polypeptide: Serine hydroxymethyltransferase (440 aa).

(6S)-5,6,7,8-tetrahydrofolate is bound by residues leucine 119 and 123-125 (GHL). An N6-(pyridoxal phosphate)lysine modification is found at lysine 228. 370 to 372 (SPF) provides a ligand contact to (6S)-5,6,7,8-tetrahydrofolate.

This sequence belongs to the SHMT family. In terms of assembly, homodimer. Pyridoxal 5'-phosphate serves as cofactor.

Its subcellular location is the cytoplasm. The enzyme catalyses (6R)-5,10-methylene-5,6,7,8-tetrahydrofolate + glycine + H2O = (6S)-5,6,7,8-tetrahydrofolate + L-serine. The protein operates within one-carbon metabolism; tetrahydrofolate interconversion. It functions in the pathway amino-acid biosynthesis; glycine biosynthesis; glycine from L-serine: step 1/1. Its function is as follows. Catalyzes the reversible interconversion of serine and glycine with tetrahydrofolate (THF) serving as the one-carbon carrier. This reaction serves as the major source of one-carbon groups required for the biosynthesis of purines, thymidylate, methionine, and other important biomolecules. Also exhibits THF-independent aldolase activity toward beta-hydroxyamino acids, producing glycine and aldehydes, via a retro-aldol mechanism. This is Serine hydroxymethyltransferase from Chloroherpeton thalassium (strain ATCC 35110 / GB-78).